The following is a 311-amino-acid chain: Ribonuclease Z (311 aa).

Zn(2+) contacts are provided by His-61, His-63, Asp-65, His-66, His-148, Asp-216, and His-275. The Proton acceptor role is filled by Asp-65.

Belongs to the RNase Z family. As to quaternary structure, homodimer. Zn(2+) serves as cofactor.

The enzyme catalyses Endonucleolytic cleavage of RNA, removing extra 3' nucleotides from tRNA precursor, generating 3' termini of tRNAs. A 3'-hydroxy group is left at the tRNA terminus and a 5'-phosphoryl group is left at the trailer molecule.. Functionally, zinc phosphodiesterase, which displays some tRNA 3'-processing endonuclease activity. Probably involved in tRNA maturation, by removing a 3'-trailer from precursor tRNA. The chain is Ribonuclease Z from Clostridium novyi (strain NT).